A 582-amino-acid chain; its full sequence is Bifunctional lycopene cyclase/phytoene synthase (582 aa).

The segment at 1 to 261 (MNQNGTRLCY…VVLGLVGCDY (261 aa)) is lycopene beta-cyclase. Helical transmembrane passes span 34 to 54 (CTYTIPAASALTVLYYPFFTA), 59 to 79 (KICILITIAILATLPWDSYLI), 99 to 121 (IPIEEVFFFAIQTYITSLTYCIF), 142 to 162 (YVVATVILALMGGGTACLLLG), 170 to 190 (LILVWACPILLFQWMMSYPFL), and 242 to 262 (ALFFLVSNMMVVLGLVGCDYA). Residues 268–582 (YESLSQPASD…LLSALVYRLE (315 aa)) form a phytoene synthase region.

The protein in the N-terminal section; belongs to the lycopene beta-cyclase family. This sequence in the C-terminal section; belongs to the phytoene/squalene synthase family.

It is found in the membrane. It carries out the reaction all-trans-lycopene = gamma-carotene. It catalyses the reaction gamma-carotene = all-trans-beta-carotene. The catalysed reaction is 2 (2E,6E,10E)-geranylgeranyl diphosphate = 15-cis-phytoene + 2 diphosphate. Its pathway is carotenoid biosynthesis; beta-carotene biosynthesis. It participates in carotenoid biosynthesis; phytoene biosynthesis; all-trans-phytoene from geranylgeranyl diphosphate: step 1/1. Bifunctional enzyme that catalyzes the reactions from geranylgeranyl diphosphate to phytoene (phytoene synthase) and lycopene to beta-carotene via the intermediate gamma-carotene (lycopene cyclase). The sequence is that of Bifunctional lycopene cyclase/phytoene synthase from Aspergillus niger (strain ATCC MYA-4892 / CBS 513.88 / FGSC A1513).